The following is a 114-amino-acid chain: Aspartate 1-decarboxylase (114 aa).

Serine 25 (schiff-base intermediate with substrate; via pyruvic acid) is an active-site residue. Residue serine 25 is modified to Pyruvic acid (Ser). Threonine 57 lines the substrate pocket. The active-site Proton donor is tyrosine 58. 73 to 75 (GAA) provides a ligand contact to substrate.

This sequence belongs to the PanD family. As to quaternary structure, heterooctamer of four alpha and four beta subunits. The cofactor is pyruvate. Is synthesized initially as an inactive proenzyme, which is activated by self-cleavage at a specific serine bond to produce a beta-subunit with a hydroxyl group at its C-terminus and an alpha-subunit with a pyruvoyl group at its N-terminus.

The protein resides in the cytoplasm. The enzyme catalyses L-aspartate + H(+) = beta-alanine + CO2. It participates in cofactor biosynthesis; (R)-pantothenate biosynthesis; beta-alanine from L-aspartate: step 1/1. Catalyzes the pyruvoyl-dependent decarboxylation of aspartate to produce beta-alanine. This Thermotoga sp. (strain RQ2) protein is Aspartate 1-decarboxylase.